The chain runs to 430 residues: Adenylosuccinate synthetase (430 aa).

Residues 12–18 (GDEGKGK) and 40–42 (GHT) contribute to the GTP site. The Proton acceptor role is filled by Asp-13. Mg(2+)-binding residues include Asp-13 and Gly-40. Residues 13 to 16 (DEGK), 38 to 41 (NAGH), Thr-130, Arg-144, Gln-225, Thr-240, and Arg-304 each bind IMP. His-41 (proton donor) is an active-site residue. Position 300–306 (300–306 (STTGRPR)) interacts with substrate. GTP is bound by residues Arg-306, 332-334 (KLD), and 414-416 (SVG).

It belongs to the adenylosuccinate synthetase family. In terms of assembly, homodimer. The cofactor is Mg(2+).

The protein resides in the cytoplasm. The catalysed reaction is IMP + L-aspartate + GTP = N(6)-(1,2-dicarboxyethyl)-AMP + GDP + phosphate + 2 H(+). Its pathway is purine metabolism; AMP biosynthesis via de novo pathway; AMP from IMP: step 1/2. Its function is as follows. Plays an important role in the de novo pathway of purine nucleotide biosynthesis. Catalyzes the first committed step in the biosynthesis of AMP from IMP. In Pelobacter propionicus (strain DSM 2379 / NBRC 103807 / OttBd1), this protein is Adenylosuccinate synthetase.